The primary structure comprises 209 residues: Ribosomal RNA large subunit methyltransferase E (209 aa).

S-adenosyl-L-methionine-binding residues include G60, W62, D80, D96, and D121. K161 functions as the Proton acceptor in the catalytic mechanism. Basic and acidic residues predominate over residues 182–196 (VQMRKPSSSRDRSRE). The interval 182-209 (VQMRKPSSSRDRSREQYLLGRGFRGRSE) is disordered.

It belongs to the class I-like SAM-binding methyltransferase superfamily. RNA methyltransferase RlmE family.

It is found in the cytoplasm. The enzyme catalyses uridine(2552) in 23S rRNA + S-adenosyl-L-methionine = 2'-O-methyluridine(2552) in 23S rRNA + S-adenosyl-L-homocysteine + H(+). Specifically methylates the uridine in position 2552 of 23S rRNA at the 2'-O position of the ribose in the fully assembled 50S ribosomal subunit. This chain is Ribosomal RNA large subunit methyltransferase E, found in Pseudomonas fluorescens (strain ATCC BAA-477 / NRRL B-23932 / Pf-5).